We begin with the raw amino-acid sequence, 251 residues long: SPbeta prophage-derived putative antirepressor protein YoqD (251 aa).

The sequence is that of SPbeta prophage-derived putative antirepressor protein YoqD (yoqD) from Bacillus subtilis (strain 168).